The sequence spans 98 residues: Integration host factor subunit alpha (98 aa).

The interval 49 to 71 (FGNFDLRDKNQRPGRNPKTGEDI) is disordered.

The protein belongs to the bacterial histone-like protein family. In terms of assembly, heterodimer of an alpha and a beta chain.

Its function is as follows. This protein is one of the two subunits of integration host factor, a specific DNA-binding protein that functions in genetic recombination as well as in transcriptional and translational control. The sequence is that of Integration host factor subunit alpha from Shewanella halifaxensis (strain HAW-EB4).